A 1210-amino-acid chain; its full sequence is DNA-directed RNA polymerase II subunit RPB2 (1210 aa).

Asp-826 is a binding site for Mg(2+). Residues Cys-1152, Cys-1155, Cys-1170, and Cys-1173 each coordinate Zn(2+). Residues 1152-1173 (CDICGLIAIASYKKDSYECRSC) form a C4-type zinc finger.

This sequence belongs to the RNA polymerase beta chain family. In terms of assembly, component of the RNA polymerase II (Pol II) complex consisting of 12 subunits.

Its subcellular location is the nucleus. It catalyses the reaction RNA(n) + a ribonucleoside 5'-triphosphate = RNA(n+1) + diphosphate. DNA-dependent RNA polymerase catalyzes the transcription of DNA into RNA using the four ribonucleoside triphosphates as substrates. Second largest component of RNA polymerase II which synthesizes mRNA precursors and many functional non-coding RNAs. Proposed to contribute to the polymerase catalytic activity and forms the polymerase active center together with the largest subunit. Pol II is the central component of the basal RNA polymerase II transcription machinery. It is composed of mobile elements that move relative to each other. RPB2 is part of the core element with the central large cleft, the clamp element that moves to open and close the cleft and the jaws that are thought to grab the incoming DNA template. In Schizosaccharomyces pombe (strain 972 / ATCC 24843) (Fission yeast), this protein is DNA-directed RNA polymerase II subunit RPB2 (rpb2).